Reading from the N-terminus, the 470-residue chain is Serine--tRNA ligase (470 aa).

Residue 272 to 274 (TAE) coordinates L-serine. Residue 303–305 (RAE) participates in ATP binding. Glutamate 326 serves as a coordination point for L-serine. 393-396 (EISS) is a binding site for ATP. Serine 428 is a binding site for L-serine.

Belongs to the class-II aminoacyl-tRNA synthetase family. Type-1 seryl-tRNA synthetase subfamily. As to quaternary structure, homodimer. The tRNA molecule binds across the dimer.

The protein localises to the cytoplasm. It catalyses the reaction tRNA(Ser) + L-serine + ATP = L-seryl-tRNA(Ser) + AMP + diphosphate + H(+). It carries out the reaction tRNA(Sec) + L-serine + ATP = L-seryl-tRNA(Sec) + AMP + diphosphate + H(+). Its pathway is aminoacyl-tRNA biosynthesis; selenocysteinyl-tRNA(Sec) biosynthesis; L-seryl-tRNA(Sec) from L-serine and tRNA(Sec): step 1/1. Catalyzes the attachment of serine to tRNA(Ser). Is also able to aminoacylate tRNA(Sec) with serine, to form the misacylated tRNA L-seryl-tRNA(Sec), which will be further converted into selenocysteinyl-tRNA(Sec). The sequence is that of Serine--tRNA ligase from Nitrobacter hamburgensis (strain DSM 10229 / NCIMB 13809 / X14).